A 138-amino-acid polypeptide reads, in one-letter code: MRFSNKFKKVPYLLQALLNVCLFFLALALSALLISETWYIVLFVYKSLFNKVDSYYEMLGELLIFFMYFEFIALIIKYFKSDFHFPLRYFIYIGITAVIRLIIIDHDQAISTFWWAMAILAMICGFFIANRRNSVVEH.

The next 4 helical transmembrane spans lie at 12–34 (YLLQALLNVCLFFLALALSALLI), 56–76 (YEMLGELLIFFMYFEFIALII), 84–104 (HFPLRYFIYIGITAVIRLIII), and 109–129 (AISTFWWAMAILAMICGFFIA).

Belongs to the PsiE family.

The protein resides in the cell membrane. The protein is Protein PsiE homolog of Bacillus subtilis (strain 168).